The sequence spans 328 residues: Malate dehydrogenase (328 aa).

11 to 17 is an NAD(+) binding site; it reads GAAGQIG. Residues R94 and R100 each contribute to the substrate site. Residues N107, Q114, and 131 to 133 contribute to the NAD(+) site; that span reads VGN. Substrate-binding residues include N133 and R164. H189 (proton acceptor) is an active-site residue.

The protein belongs to the LDH/MDH superfamily. MDH type 2 family.

It catalyses the reaction (S)-malate + NAD(+) = oxaloacetate + NADH + H(+). Its function is as follows. Catalyzes the reversible oxidation of malate to oxaloacetate. This chain is Malate dehydrogenase, found in Acinetobacter baumannii (strain SDF).